We begin with the raw amino-acid sequence, 180 residues long: Ribulose bisphosphate carboxylase small subunit, chloroplastic 5 (180 aa).

The transit peptide at 1–56 (MASSVMSSAAVATRGNGAQASMVAPFTGLKSTASFPVSRKQNLDITSIASNGGRVR) directs the protein to the chloroplast.

It belongs to the RuBisCO small chain family. As to quaternary structure, heterohexadecamer of 8 large and 8 small subunits.

The protein resides in the plastid. The protein localises to the chloroplast. In terms of biological role, ruBisCO catalyzes two reactions: the carboxylation of D-ribulose 1,5-bisphosphate, the primary event in carbon dioxide fixation, as well as the oxidative fragmentation of the pentose substrate. Both reactions occur simultaneously and in competition at the same active site. Although the small subunit is not catalytic it is essential for maximal activity. The chain is Ribulose bisphosphate carboxylase small subunit, chloroplastic 5 from Solanum tuberosum (Potato).